Reading from the N-terminus, the 97-residue chain is Small ribosomal subunit protein eS25 (97 aa).

A disordered region spans residues 1–24 (MAPAASGAKKQKKKWSKGKVKDKA). Residues 9 to 18 (KKQKKKWSKG) show a composition bias toward basic residues.

It belongs to the eukaryotic ribosomal protein eS25 family. As to quaternary structure, component of the small ribosomal subunit (SSU). Mature N.crassa ribosomes consist of a small (40S) and a large (60S) subunit. The 40S small subunit contains 1 molecule of ribosomal RNA (18S rRNA) and at least 32 different proteins. The large 60S subunit contains 3 rRNA molecules (26S, 5.8S and 5S rRNA) and at least 42 different proteins.

Its subcellular location is the cytoplasm. Component of the ribosome, a large ribonucleoprotein complex responsible for the synthesis of proteins in the cell. The small ribosomal subunit (SSU) binds messenger RNAs (mRNAs) and translates the encoded message by selecting cognate aminoacyl-transfer RNA (tRNA) molecules. The large subunit (LSU) contains the ribosomal catalytic site termed the peptidyl transferase center (PTC), which catalyzes the formation of peptide bonds, thereby polymerizing the amino acids delivered by tRNAs into a polypeptide chain. The nascent polypeptides leave the ribosome through a tunnel in the LSU and interact with protein factors that function in enzymatic processing, targeting, and the membrane insertion of nascent chains at the exit of the ribosomal tunnel. The polypeptide is Small ribosomal subunit protein eS25 (rps-25) (Neurospora crassa (strain ATCC 24698 / 74-OR23-1A / CBS 708.71 / DSM 1257 / FGSC 987)).